The chain runs to 886 residues: Microsomal triacylglycerol transfer protein (886 aa).

The N-terminal stretch at 1-27 (MENKNKKCLRTLLLLALFLGLLEDGKT) is a signal peptide. The Vitellogenin domain maps to 30-653 (IAPNSQQIFK…SQASSFKLGI (624 aa)). N-linked (GlcNAc...) asparagine glycans are attached at residues N358, N484, N502, and N616.

The protein resides in the endoplasmic reticulum. Its subcellular location is the golgi apparatus. The catalysed reaction is a 1,2-diacyl-sn-glycero-3-phosphocholine(in) = a 1,2-diacyl-sn-glycero-3-phosphocholine(out). It carries out the reaction a 1,2-diacyl-sn-glycero-3-phosphoethanolamine(in) = a 1,2-diacyl-sn-glycero-3-phosphoethanolamine(out). In terms of biological role, catalyzes the transport of phospholipids such as phosphatidylethanolamine (1,2-diacyl-sn-glycero-3-phosphoethanolamine) and phosphatidylcholine (1,2-diacyl-sn-glycero-3-phosphocholine) between membranes. Required for the assembly and secretion of plasma lipoproteins that contain apolipoprotein B. The chain is Microsomal triacylglycerol transfer protein from Drosophila melanogaster (Fruit fly).